We begin with the raw amino-acid sequence, 419 residues long: MRAEIIAVGTEILTGQIVNTNAQFLSEKMAELGIDIYFQTAVGDNEERLLSLLDIASQRSQLVILCGGLGPTEDDLTKQTLAKFLGKSLTVDLLASQKLDRFFASRPQFARTPNNERQAQLVEGSIPLQNLTGLAVGGIVTSKGVQYMVLPGPPSELNPMVMEQVVPILSNNGTKLYSRVLRFFGIGESQLVTILEDIIKNQTDPTIAPYAKVGEVTLRLSTKAENQDEADFKLDSLEKEILALKTLDNRKLKDLLYGYGDNNSMARTVLELLKVQNKTITAAESLTAGLFQSQLAEFSGASQVFNGGFTTYSMEAKSQLLGIPKKKLQEYGVISHFTAEAMAQQARQLLKADFGIGLTGVAGPDELEGYPAGTVFIGIATPEGVSSIKVSIGGKSRSDVRHISTLHAFDLVRRALLKI.

It belongs to the CinA family.

This Streptococcus agalactiae serotype Ia (strain ATCC 27591 / A909 / CDC SS700) protein is Putative competence-damage inducible protein.